We begin with the raw amino-acid sequence, 146 residues long: Late protein OPG112 (146 aa).

Residues 10 to 32 (LAMTAFFGELNTLDIMALIMSIF) traverse the membrane as a helical segment.

It belongs to the orthopoxvirus OPG112 family.

The protein localises to the host membrane. It is found in the host cytoplasm. Contributes to the formation of crescents and immature virions (IV). Interacts with phosphatidylinositol-3-phosphate (PI3P) and phosphatidylinositol-4-phosphate (PI4P) lipids in order to form virion membranes. Mechanistically, mediates proper formation of OPG125-hexamers, and hence the honey comb lattice and spherical immature virus. This chain is Late protein OPG112 (OPG112), found in Homo sapiens (Human).